A 138-amino-acid chain; its full sequence is Large ribosomal subunit protein uL29 (138 aa).

The tract at residues 1–79 is large ribosomal subunit protein uL29; that stretch reads MAKSKMLDLR…TNKVIKADYN (79 aa). Positions 80–138 are unknown; that stretch reads KAVEEAEKAGKEVRAKQRKFLEEQYGQQSQTKVNEADIQKAMQAAEQETVEPDTKGETK. The disordered stretch occupies residues 103–138; sequence QYGQQSQTKVNEADIQKAMQAAEQETVEPDTKGETK.

This sequence belongs to the universal ribosomal protein uL29 family.

The protein is Large ribosomal subunit protein uL29 of Mycoplasma capricolum subsp. capricolum (strain California kid / ATCC 27343 / NCTC 10154).